A 352-amino-acid chain; its full sequence is Neutral protease 2 (352 aa).

The N-terminal stretch at 1–19 (MRVTTLSTALFALASTAVS) is a signal peptide. The propeptide occupies 20 to 175 (APTAGSSSPG…TKALSQLTRR (156 aa)). Disulfide bonds link Cys181/Cys253, Cys260/Cys278, and Cys292/Cys352. His303 is a Zn(2+) binding site. The active site involves Glu304. Residues His307 and Asp318 each contribute to the Zn(2+) site.

Belongs to the peptidase M35 family. Zn(2+) serves as cofactor.

It carries out the reaction Preferential cleavage of bonds with hydrophobic residues in P1'. Also 3-Asn-|-Gln-4 and 8-Gly-|-Ser-9 bonds in insulin B chain.. In terms of biological role, metalloprotease that shows high activities on basic nuclear substrates such as histone and protamine. The chain is Neutral protease 2 from Aspergillus oryzae (strain ATCC 42149 / RIB 40) (Yellow koji mold).